The following is a 486-amino-acid chain: MVENQKAMPQPEMRRIRRIHFVGIGGVGMCGIAEVLLNLGYEVSGSDLKASPVTERLESFGAQIFIGHRAENAAAADVLVVSSAVNTSNPEVATALERRIPVVPRAEMLAELMRYRHGIAVAGTHGKTTTTSLIASVFAAGGLDPTFVIGGRLNAAGTNAQLGTSRYLIAEADESDASFLHLQPLVAVVTNIDADHMATYDGDFNKLKKTFVEFLHNLPFYGLAVMCLDDPVVREILPLVKRPTVTYGFSEDADVRAINVRQQGMQTFFTVLRPDREPLDVSVNMPGNHNVLNSLATICIATDEGVSDEAIVQGLSGFQGVGRRFQVYGELPVDGGNVMLVDDYGHHPTEVAAVIKAVRGGWPERRLVMVYQPHRYSRTRDLYDDFVNVLADANVLLLMEVYPAGEEPIPGADSRKLCNSIRQRGQLDPIYIERGVDLAPLVKPLLRAGDILLCQGAGDIGGLAPKLLKSELFAGAVAASVEGKLK.

123–129 (GTHGKTT) contacts ATP.

The protein belongs to the MurCDEF family.

Its subcellular location is the cytoplasm. The enzyme catalyses UDP-N-acetyl-alpha-D-muramate + L-alanine + ATP = UDP-N-acetyl-alpha-D-muramoyl-L-alanine + ADP + phosphate + H(+). It functions in the pathway cell wall biogenesis; peptidoglycan biosynthesis. Its function is as follows. Cell wall formation. This Pseudomonas fluorescens (strain Pf0-1) protein is UDP-N-acetylmuramate--L-alanine ligase.